The following is a 336-amino-acid chain: Pyridoxal 5'-phosphate synthase subunit PdxS (336 aa).

D64 contacts D-ribose 5-phosphate. The active-site Schiff-base intermediate with D-ribose 5-phosphate is K121. G193 serves as a coordination point for D-ribose 5-phosphate. D-glyceraldehyde 3-phosphate is bound at residue K205. D-ribose 5-phosphate contacts are provided by residues G254 and 275-276; that span reads GS.

It belongs to the PdxS/SNZ family. In the presence of PdxT, forms a dodecamer of heterodimers.

It carries out the reaction aldehydo-D-ribose 5-phosphate + D-glyceraldehyde 3-phosphate + L-glutamine = pyridoxal 5'-phosphate + L-glutamate + phosphate + 3 H2O + H(+). The protein operates within cofactor biosynthesis; pyridoxal 5'-phosphate biosynthesis. Catalyzes the formation of pyridoxal 5'-phosphate from ribose 5-phosphate (RBP), glyceraldehyde 3-phosphate (G3P) and ammonia. The ammonia is provided by the PdxT subunit. Can also use ribulose 5-phosphate and dihydroxyacetone phosphate as substrates, resulting from enzyme-catalyzed isomerization of RBP and G3P, respectively. The chain is Pyridoxal 5'-phosphate synthase subunit PdxS from Pyrobaculum aerophilum (strain ATCC 51768 / DSM 7523 / JCM 9630 / CIP 104966 / NBRC 100827 / IM2).